The sequence spans 288 residues: Diaminopimelate epimerase (288 aa).

Residues Asn14 and Asn67 each contribute to the substrate site. The Proton donor role is filled by Cys76. Residues 77 to 78, Asn166, Asn199, and 217 to 218 each bind substrate; these read GN and ER. The active-site Proton acceptor is Cys226. 227-228 provides a ligand contact to substrate; that stretch reads GT.

The protein belongs to the diaminopimelate epimerase family. As to quaternary structure, homodimer.

It is found in the cytoplasm. The catalysed reaction is (2S,6S)-2,6-diaminopimelate = meso-2,6-diaminopimelate. Its pathway is amino-acid biosynthesis; L-lysine biosynthesis via DAP pathway; DL-2,6-diaminopimelate from LL-2,6-diaminopimelate: step 1/1. Functionally, catalyzes the stereoinversion of LL-2,6-diaminopimelate (L,L-DAP) to meso-diaminopimelate (meso-DAP), a precursor of L-lysine and an essential component of the bacterial peptidoglycan. This Bacillus anthracis (strain A0248) protein is Diaminopimelate epimerase.